The following is a 222-amino-acid chain: MSYKLMLVENDIVLSKAIQEYLIDQGFNVYIANNGLEALNLAYQYNFDLIISDIMMPLVNGYELLAKLKKNKALSKIPVIFLTAKGMTKDRIKGYDMGCYGYLSKPFDPNELLSIINNLIARDVLKEASLQNSATSNQQLNHKIRLTPREKSILDLVVDGLTNKEISTILNTSVRNVEKYVSRLLHKTNMKNRTLLVKYSINNNLLNNEINERANDGTRTRE.

The Response regulatory domain maps to 4-120 (KLMLVENDIV…ELLSIINNLI (117 aa)). Position 53 is a 4-aspartylphosphate (aspartate 53). Residues 139 to 204 (QLNHKIRLTP…LLVKYSINNN (66 aa)) form the HTH luxR-type domain. Residues 163 to 182 (NKEISTILNTSVRNVEKYVS) constitute a DNA-binding region (H-T-H motif).

The protein resides in the plastid. The protein localises to the chloroplast. The protein is Probable transcriptional regulator ycf29 (ycf29) of Pyropia yezoensis (Susabi-nori).